The following is a 478-amino-acid chain: UDP-N-acetylmuramate--L-alanine ligase (478 aa).

An ATP-binding site is contributed by 120-126; sequence GSHGKTT.

Belongs to the MurCDEF family.

The protein localises to the cytoplasm. It catalyses the reaction UDP-N-acetyl-alpha-D-muramate + L-alanine + ATP = UDP-N-acetyl-alpha-D-muramoyl-L-alanine + ADP + phosphate + H(+). Its pathway is cell wall biogenesis; peptidoglycan biosynthesis. Functionally, cell wall formation. This is UDP-N-acetylmuramate--L-alanine ligase from Rickettsia bellii (strain OSU 85-389).